The chain runs to 189 residues: Ribosome maturation factor RimM (189 aa).

A PRC barrel domain is found at Ser118–Phe189.

It belongs to the RimM family. As to quaternary structure, binds ribosomal protein uS19.

It localises to the cytoplasm. Functionally, an accessory protein needed during the final step in the assembly of 30S ribosomal subunit, possibly for assembly of the head region. Essential for efficient processing of 16S rRNA. May be needed both before and after RbfA during the maturation of 16S rRNA. It has affinity for free ribosomal 30S subunits but not for 70S ribosomes. The sequence is that of Ribosome maturation factor RimM from Ruthia magnifica subsp. Calyptogena magnifica.